The chain runs to 364 residues: Ribosomal RNA large subunit methyltransferase M (364 aa).

S-adenosyl-L-methionine is bound by residues S194, 227–230 (CPGG), D246, D266, and D284. K313 serves as the catalytic Proton acceptor.

Belongs to the class I-like SAM-binding methyltransferase superfamily. RNA methyltransferase RlmE family. RlmM subfamily. In terms of assembly, monomer.

The protein resides in the cytoplasm. The catalysed reaction is cytidine(2498) in 23S rRNA + S-adenosyl-L-methionine = 2'-O-methylcytidine(2498) in 23S rRNA + S-adenosyl-L-homocysteine + H(+). In terms of biological role, catalyzes the 2'-O-methylation at nucleotide C2498 in 23S rRNA. This chain is Ribosomal RNA large subunit methyltransferase M, found in Actinobacillus succinogenes (strain ATCC 55618 / DSM 22257 / CCUG 43843 / 130Z).